Reading from the N-terminus, the 345-residue chain is Phenylalanine--tRNA ligase alpha subunit (345 aa).

E253 is a binding site for Mg(2+).

This sequence belongs to the class-II aminoacyl-tRNA synthetase family. Phe-tRNA synthetase alpha subunit type 1 subfamily. As to quaternary structure, tetramer of two alpha and two beta subunits. Mg(2+) serves as cofactor.

It is found in the cytoplasm. The enzyme catalyses tRNA(Phe) + L-phenylalanine + ATP = L-phenylalanyl-tRNA(Phe) + AMP + diphosphate + H(+). This is Phenylalanine--tRNA ligase alpha subunit from Nitratidesulfovibrio vulgaris (strain DP4) (Desulfovibrio vulgaris).